We begin with the raw amino-acid sequence, 115 residues long: Promotilin (115 aa).

An N-terminal signal peptide occupies residues 1–25; that stretch reads MLSRKATAILLVVHAAAMLASQTEG. The tract at residues 43–73 is disordered; that stretch reads RYKGQKKSLSVQQRSEEVGPVDPAEPREEKQ.

Belongs to the motilin family.

It is found in the secreted. Its function is as follows. Plays an important role in the regulation of interdigestive gastrointestinal motility and indirectly causes rhythmic contraction of duodenal and colonic smooth muscle. The chain is Promotilin (MLN) from Ovis aries (Sheep).